The chain runs to 187 residues: Thioredoxin F, chloroplastic (187 aa).

A chloroplast-targeting transit peptide spans 1-72; the sequence is MALRLSVSSS…GSDTATVGAE (72 aa). A Thioredoxin domain is found at 73–186; the sequence is AEAVAVTGQV…LIQAIETVKS (114 aa). Active-site nucleophile residues include cysteine 111 and cysteine 114. Cysteine 111 and cysteine 114 form a disulfide bridge.

Belongs to the thioredoxin family. Plant F-type subfamily.

Its subcellular location is the plastid. It localises to the chloroplast. Its function is as follows. Thiol-disulfide oxidoreductase involved in the redox regulation of enzymes of both reductive pentose phosphate pathway (Calvin-Benson cycle) and oxidative pentose phosphate pathway. The polypeptide is Thioredoxin F, chloroplastic (Oryza sativa subsp. japonica (Rice)).